The following is a 147-amino-acid chain: Hemoglobin subunit beta (147 aa).

Residues 3-147 enclose the Globin domain; the sequence is EWTDDERAII…VVSALGRQYH (145 aa). Heme b is bound by residues histidine 64 and histidine 93.

This sequence belongs to the globin family. As to quaternary structure, heterotetramer of two alpha chains and two beta chains. Red blood cells.

Functionally, involved in oxygen transport from gills to the various peripheral tissues. The protein is Hemoglobin subunit beta (hbb) of Merlangius merlangus (Whiting).